A 311-amino-acid polypeptide reads, in one-letter code: 4-diphosphocytidyl-2-C-methyl-D-erythritol kinase (311 aa).

Lysine 16 is a catalytic residue. ATP is bound at residue 100 to 110 (PIGAGLAGGSS). Residue aspartate 142 is part of the active site.

The protein belongs to the GHMP kinase family. IspE subfamily.

It carries out the reaction 4-CDP-2-C-methyl-D-erythritol + ATP = 4-CDP-2-C-methyl-D-erythritol 2-phosphate + ADP + H(+). The protein operates within isoprenoid biosynthesis; isopentenyl diphosphate biosynthesis via DXP pathway; isopentenyl diphosphate from 1-deoxy-D-xylulose 5-phosphate: step 3/6. Functionally, catalyzes the phosphorylation of the position 2 hydroxy group of 4-diphosphocytidyl-2C-methyl-D-erythritol. This chain is 4-diphosphocytidyl-2-C-methyl-D-erythritol kinase, found in Prochlorococcus marinus (strain MIT 9215).